The sequence spans 81 residues: ATP synthase subunit c, chloroplastic (81 aa).

Helical transmembrane passes span 7-27 (AASV…PGIG) and 57-77 (LAFM…LLFA).

This sequence belongs to the ATPase C chain family. As to quaternary structure, F-type ATPases have 2 components, F(1) - the catalytic core - and F(0) - the membrane proton channel. F(1) has five subunits: alpha(3), beta(3), gamma(1), delta(1), epsilon(1). F(0) has four main subunits: a(1), b(1), b'(1) and c(10-14). The alpha and beta chains form an alternating ring which encloses part of the gamma chain. F(1) is attached to F(0) by a central stalk formed by the gamma and epsilon chains, while a peripheral stalk is formed by the delta, b and b' chains.

It localises to the plastid. The protein localises to the chloroplast thylakoid membrane. F(1)F(0) ATP synthase produces ATP from ADP in the presence of a proton or sodium gradient. F-type ATPases consist of two structural domains, F(1) containing the extramembraneous catalytic core and F(0) containing the membrane proton channel, linked together by a central stalk and a peripheral stalk. During catalysis, ATP synthesis in the catalytic domain of F(1) is coupled via a rotary mechanism of the central stalk subunits to proton translocation. In terms of biological role, key component of the F(0) channel; it plays a direct role in translocation across the membrane. A homomeric c-ring of between 10-14 subunits forms the central stalk rotor element with the F(1) delta and epsilon subunits. This chain is ATP synthase subunit c, chloroplastic, found in Pelargonium hortorum (Common geranium).